A 206-amino-acid polypeptide reads, in one-letter code: Large ribosomal subunit protein uL4 (206 aa).

Positions 48–97 (THAVKNRSLVSGGGKKPWKQKHTGRARQGSTRASQWVGGGKAMGPKPRDY) are disordered. Positions 63-72 (KPWKQKHTGR) are enriched in basic residues.

This sequence belongs to the universal ribosomal protein uL4 family. As to quaternary structure, part of the 50S ribosomal subunit.

Its function is as follows. One of the primary rRNA binding proteins, this protein initially binds near the 5'-end of the 23S rRNA. It is important during the early stages of 50S assembly. It makes multiple contacts with different domains of the 23S rRNA in the assembled 50S subunit and ribosome. In terms of biological role, forms part of the polypeptide exit tunnel. The protein is Large ribosomal subunit protein uL4 of Anaeromyxobacter sp. (strain K).